We begin with the raw amino-acid sequence, 1923 residues long: GREB1-like protein (1923 aa).

A compositionally biased stretch (acidic residues) spans 87–96; sequence EDDEDDEEMS. Disordered regions lie at residues 87–111, 246–326, and 1101–1222; these read EDDE…KPAP, SCHS…GPPK, and RAAV…RGCR. Low complexity predominate over residues 252 to 262; that stretch reads PSSSVSSTVTP. 3 stretches are compositionally biased toward polar residues: residues 263-278, 296-307, and 1119-1161; these read ENGT…TQTD, TPAHTGNYSLSP, and PQSN…SPAT. Residues 1195–1206 are compositionally biased toward low complexity; that stretch reads SSTTSKPSSSSS. The helical transmembrane segment at 1843–1862 threads the bilayer; the sequence is GVFFSGLLLYLCDSFVGADL.

It belongs to the GREB1 family. In terms of tissue distribution, widely expressed, with prominent expression in the cochlea. Expressed at high levels in fetal kidney. In adult tissues, highest levels in vagina, cervix and epididymis.

The protein resides in the membrane. Its function is as follows. Plays a major role in early metanephros and genital development. In Homo sapiens (Human), this protein is GREB1-like protein (GREB1L).